Here is a 1384-residue protein sequence, read N- to C-terminus: DNA-directed RNA polymerase subunit beta (1384 aa).

It belongs to the RNA polymerase beta chain family. The RNAP catalytic core consists of 2 alpha, 1 beta, 1 beta' and 1 omega subunit. When a sigma factor is associated with the core the holoenzyme is formed, which can initiate transcription.

The catalysed reaction is RNA(n) + a ribonucleoside 5'-triphosphate = RNA(n+1) + diphosphate. DNA-dependent RNA polymerase catalyzes the transcription of DNA into RNA using the four ribonucleoside triphosphates as substrates. This is DNA-directed RNA polymerase subunit beta from Xylella fastidiosa (strain M12).